The sequence spans 159 residues: Phosphopantetheine adenylyltransferase (159 aa).

Position 9 (serine 9) interacts with substrate. ATP-binding positions include serine 9–phenylalanine 10 and histidine 17. Substrate is bound by residues lysine 41, leucine 73, and arginine 87. Residues glycine 88–arginine 90, glutamate 98, and tyrosine 123–serine 129 each bind ATP.

This sequence belongs to the bacterial CoaD family. In terms of assembly, homohexamer. Mg(2+) serves as cofactor.

It localises to the cytoplasm. It carries out the reaction (R)-4'-phosphopantetheine + ATP + H(+) = 3'-dephospho-CoA + diphosphate. The protein operates within cofactor biosynthesis; coenzyme A biosynthesis; CoA from (R)-pantothenate: step 4/5. Its function is as follows. Reversibly transfers an adenylyl group from ATP to 4'-phosphopantetheine, yielding dephospho-CoA (dPCoA) and pyrophosphate. In Shouchella clausii (strain KSM-K16) (Alkalihalobacillus clausii), this protein is Phosphopantetheine adenylyltransferase.